Consider the following 32-residue polypeptide: Photosystem II reaction center protein Psb30 (32 aa).

A helical transmembrane segment spans residues 3-23 (IVIVQLGSLALITLAGPIIIV).

It belongs to the Psb30/Ycf12 family. PSII is composed of 1 copy each of membrane proteins PsbA, PsbB, PsbC, PsbD, PsbE, PsbF, PsbH, PsbI, PsbJ, PsbK, PsbL, PsbM, PsbT, PsbY, PsbZ, Psb30/Ycf12, peripheral proteins of the oxygen-evolving complex and a large number of cofactors. It forms dimeric complexes.

Its subcellular location is the plastid. The protein localises to the chloroplast thylakoid membrane. Functionally, a core subunit of photosystem II (PSII), probably helps stabilize the reaction center. The chain is Photosystem II reaction center protein Psb30 from Euglena viridis (Cercaria viridis).